We begin with the raw amino-acid sequence, 525 residues long: GMP synthase [glutamine-hydrolyzing] (525 aa).

A Glutamine amidotransferase type-1 domain is found at 9 to 202; sequence SILIIDFGSQ…VHKIVGLKSD (194 aa). The active-site Nucleophile is the Cys86. Catalysis depends on residues His176 and Glu178. Positions 203–400 constitute a GMPS ATP-PPase domain; that stretch reads WTMAAYRAEM…LGLPESFIGR (198 aa). Residue 230-236 coordinates ATP; it reads SGGVDSS.

As to quaternary structure, homodimer.

It catalyses the reaction XMP + L-glutamine + ATP + H2O = GMP + L-glutamate + AMP + diphosphate + 2 H(+). It participates in purine metabolism; GMP biosynthesis; GMP from XMP (L-Gln route): step 1/1. Its function is as follows. Catalyzes the synthesis of GMP from XMP. This Agrobacterium fabrum (strain C58 / ATCC 33970) (Agrobacterium tumefaciens (strain C58)) protein is GMP synthase [glutamine-hydrolyzing].